The following is a 149-amino-acid chain: MEQTYVMVKPDGVQRGLVGEIISRIEKRGLKIVALRMNVISEATAKEHYSEHAAKPFFPGLVGFITSGPSVSMVVEGKDAIRVMRAINGATNPVDAAPGTVRGDFALDVGRNVVHASDSPEAAAREIAIHFKDSEIGNYSRIDEVCLYE.

ATP is bound by residues Lys-9, Phe-57, Arg-85, Thr-91, Arg-102, and Asn-112. His-115 functions as the Pros-phosphohistidine intermediate in the catalytic mechanism.

The protein belongs to the NDK family. Mg(2+) is required as a cofactor.

Its subcellular location is the cytoplasm. The catalysed reaction is a 2'-deoxyribonucleoside 5'-diphosphate + ATP = a 2'-deoxyribonucleoside 5'-triphosphate + ADP. It carries out the reaction a ribonucleoside 5'-diphosphate + ATP = a ribonucleoside 5'-triphosphate + ADP. Functionally, major role in the synthesis of nucleoside triphosphates other than ATP. The ATP gamma phosphate is transferred to the NDP beta phosphate via a ping-pong mechanism, using a phosphorylated active-site intermediate. The chain is Nucleoside diphosphate kinase from Methanosarcina barkeri (strain Fusaro / DSM 804).